We begin with the raw amino-acid sequence, 298 residues long: Probable 3-hydroxyacyl-CoA dehydrogenase F54C8.1 (298 aa).

It belongs to the 3-hydroxyacyl-CoA dehydrogenase family. Homodimer.

The protein resides in the mitochondrion matrix. It catalyses the reaction a (3S)-3-hydroxyacyl-CoA + NAD(+) = a 3-oxoacyl-CoA + NADH + H(+). The protein operates within lipid metabolism; fatty acid beta-oxidation. The sequence is that of Probable 3-hydroxyacyl-CoA dehydrogenase F54C8.1 from Caenorhabditis elegans.